A 229-amino-acid chain; its full sequence is GTP cyclohydrolase 1 (229 aa).

The interval 1–26 (MDAKIKPIRGTNPAEGRPEFQPAELE) is disordered. Zn(2+)-binding residues include Cys-118, His-121, and Cys-189.

This sequence belongs to the GTP cyclohydrolase I family. Toroid-shaped homodecamer, composed of two pentamers of five dimers.

The enzyme catalyses GTP + H2O = 7,8-dihydroneopterin 3'-triphosphate + formate + H(+). Its pathway is cofactor biosynthesis; 7,8-dihydroneopterin triphosphate biosynthesis; 7,8-dihydroneopterin triphosphate from GTP: step 1/1. The protein is GTP cyclohydrolase 1 of Rhodopseudomonas palustris (strain ATCC BAA-98 / CGA009).